Consider the following 395-residue polypeptide: MSVARIVFPPLSHVGWGALDQLVPEVKRLGAKHILVITDPMLVKIGLVDQVTSPLRQEGYSVHVYTDVVPEPPLETGEKAVAFARDGKFDLVIGVGGGSALDLAKLAAVLAVHDGSVADYLNLTGTRTLEKKGLPKILIPTTSGTGSEVTNISVLSLETTKDVVTHDYLLADVAIVDPQLTVSVPPRVTAATGIDALTHAVEAYVSVNASPTSDGLAVAAIRLISRSLRKAVANGSDKQARIDMANGSYLAGLAFFNAGVAGVHALAYPLGGQFHIAHGESNAVLLPYVMGYIRQSCTKRMADIFNALGGNSSFLSEVEASYRCVEELERFVADVGIPKTLGGFGIPESALESLTKDAVQQKRLLARSPLPLLEADIRAIYEAAFAGTIVEPHKA.

NAD(+)-binding positions include 98–102 (GSALD) and 141–144 (TTSG).

The protein belongs to the iron-containing alcohol dehydrogenase family. In terms of assembly, homooctamer.

The catalysed reaction is glycerol + NAD(+) = dihydroxyacetone + NADH + H(+). The enzyme catalyses a long-chain primary fatty alcohol + 2 NAD(+) + H2O = a long-chain fatty acid + 2 NADH + 3 H(+). Its function is as follows. Long-chain alkyl alcohol dehydrogenase that can oxidize a broad range of alkyl alcohols from ethanol to 1-triacontanol (C2 to C30) as well as 1,3-propanediol and acetaldehyde. The best substrate is ethanol. Also oxidizes glycerol. The polypeptide is Long-chain-alcohol dehydrogenase 1 (adh1) (Geobacillus thermodenitrificans (strain NG80-2)).